Reading from the N-terminus, the 79-residue chain is Large ribosomal subunit protein uL24 (79 aa).

The tract at residues 1–29 is disordered; sequence MPKLKKLLLKVSTSKPNTNPPSQNEEKGT. The segment covering 11 to 23 has biased composition (polar residues); it reads VSTSKPNTNPPSQ.

The protein belongs to the universal ribosomal protein uL24 family. As to quaternary structure, part of the 50S ribosomal subunit.

In terms of biological role, one of two assembly initiator proteins, it binds directly to the 5'-end of the 23S rRNA, where it nucleates assembly of the 50S subunit. One of the proteins that surrounds the polypeptide exit tunnel on the outside of the subunit. This chain is Large ribosomal subunit protein uL24 (rplX), found in Onion yellows phytoplasma (strain OY-M).